Reading from the N-terminus, the 432-residue chain is MKKISSHYSVVIAILVVVTMTSMCQAVGSNVYPLILVPGNGGNQLEVRLDREYKPSSVWCSSWLYPIHKKSGGWFRLWFDAAVLLSPFTRCFSDRMMLYYDPDLDDYQNAPGVQTRVPHFGSTKSLLYLDPRLRDATSYMEHLVKALEKKCGYVNDQTILGAPYDFRYGLAASGHPSRVASQFLQDLKQLVEKTSSENEGKPVILLSHSLGGLFVLHFLNRTTPSWRRKYIKHFVALAAPWGGTISQMKTFASGNTLGVPLVNPLLVRRHQRTSESNQWLLPSTKVFHDRTKPLVVTPQVNYTAYEMDRFFADIGFSQGVVPYKTRVLPLTEELMTPGVPVTCIYGRGVDTPEVLMYGKGGFDKQPEIKYGDGDGTVNLASLAALKVDSLNTVEIDGVSHTSILKDEIALKEIMKQISIINYELANVNAVNE.

A helical membrane pass occupies residues 7–29 (HYSVVIAILVVVTMTSMCQAVGS). Ser-209 acts as the Acyl-ester intermediate in catalysis. Active-site charge relay system residues include Asp-374 and His-400.

It belongs to the AB hydrolase superfamily. Lipase family.

Its subcellular location is the membrane. The polypeptide is Lecithin-cholesterol acyltransferase-like 1 (LCAT1) (Arabidopsis thaliana (Mouse-ear cress)).